The chain runs to 122 residues: Large ribosomal subunit protein uL14 (122 aa).

It belongs to the universal ribosomal protein uL14 family. As to quaternary structure, part of the 50S ribosomal subunit. Forms a cluster with proteins L3 and L19. In the 70S ribosome, L14 and L19 interact and together make contacts with the 16S rRNA in bridges B5 and B8.

In terms of biological role, binds to 23S rRNA. Forms part of two intersubunit bridges in the 70S ribosome. This Lactobacillus helveticus (strain DPC 4571) protein is Large ribosomal subunit protein uL14.